A 65-amino-acid polypeptide reads, in one-letter code: Large ribosomal subunit protein uL29 (65 aa).

It belongs to the universal ribosomal protein uL29 family.

This is Large ribosomal subunit protein uL29 from Buchnera aphidicola subsp. Acyrthosiphon pisum (strain 5A).